The primary structure comprises 625 residues: Interleukin-1 receptor-associated kinase-like 2 (625 aa).

The Death domain occupies 13–94 (LDDPCRNMDA…RAAQIILNWK (82 aa)). The tract at residues 111–181 (KPEKPLAASV…SSDSKDFSTS (71 aa)) is disordered. S144 is modified (phosphoserine). Residues 169–181 (LPTSSDSKDFSTS) are compositionally biased toward polar residues. The Protein kinase domain maps to 210 to 503 (FNQNHKISQG…GSVAAVEEWL (294 aa)). ATP is bound by residues 216 to 224 (ISQGTFADV), K237, and 337 to 340 (KSSN). The disordered stretch occupies residues 513-539 (SGLSEGTGSSSNTPEETDDVDNSSLDA). Positions 516-526 (SEGTGSSSNTP) are enriched in polar residues.

Belongs to the protein kinase superfamily. TKL Ser/Thr protein kinase family. Pelle subfamily. As to quaternary structure, interacts with MYD88. IL-1 stimulation leads to the formation of a signaling complex which dissociates from the IL-1 receptor following the binding of PELI1.

In terms of biological role, binds to the IL-1 type I receptor following IL-1 engagement, triggering intracellular signaling cascades leading to transcriptional up-regulation and mRNA stabilization. The polypeptide is Interleukin-1 receptor-associated kinase-like 2 (IRAK2) (Pongo abelii (Sumatran orangutan)).